A 369-amino-acid chain; its full sequence is Anhydro-N-acetylmuramic acid kinase (369 aa).

12–19 (GTSLDGVD) provides a ligand contact to ATP.

The protein belongs to the anhydro-N-acetylmuramic acid kinase family.

It catalyses the reaction 1,6-anhydro-N-acetyl-beta-muramate + ATP + H2O = N-acetyl-D-muramate 6-phosphate + ADP + H(+). The protein operates within amino-sugar metabolism; 1,6-anhydro-N-acetylmuramate degradation. Its pathway is cell wall biogenesis; peptidoglycan recycling. Catalyzes the specific phosphorylation of 1,6-anhydro-N-acetylmuramic acid (anhMurNAc) with the simultaneous cleavage of the 1,6-anhydro ring, generating MurNAc-6-P. Is required for the utilization of anhMurNAc either imported from the medium or derived from its own cell wall murein, and thus plays a role in cell wall recycling. The polypeptide is Anhydro-N-acetylmuramic acid kinase (Shigella boydii serotype 4 (strain Sb227)).